The chain runs to 302 residues: Putative receptor-like protein 16 (302 aa).

3 LRR repeats span residues 1 to 19 (MNLTTNGFQRNLPSSLGNM), 20 to 43 (EMIEFLDISHNSFHGKLPRSFLKG), and 45 to 70 (DSLIVLKLSHKKLSEEVFPEASNFFS). One copy of the LRR 4; degenerate repeat lies at 72–91 (LELSMDNNLFTGKIGRGLQS). LRR repeat units follow at residues 92–115 (LRSLIMLDISNNNLSGVIPSWFDQ), 116–140 (LQDLHSLQISNNLLEGEVPISLFNM), 142–164 (SLQLLALSANSLSGDLPQAISGY), 166–188 (ALKVLLLRDNNLSGVIPDTLLGK), 190–211 (IIVLDLRNNRLSGNIPEFINTQ), 213–234 (IRILLLRGNNLTGSIPRRLCAV), and 235–258 (RSIHLLDLANNKLNGSIPSCLRNA).

The protein belongs to the RLP family.

The protein is Putative receptor-like protein 16 of Arabidopsis thaliana (Mouse-ear cress).